Reading from the N-terminus, the 259-residue chain is Putative zinc metalloprotease Rip2 (259 aa).

Transmembrane regions (helical) follow at residues 14–34 (PIFLLVIAVTAAGGALAWIAA) and 39–59 (PLSYVGVFILVIAGWLMSLCL). His-60 provides a ligand contact to Zn(2+). The active site involves Glu-61. His-64 contributes to the Zn(2+) binding site. Transmembrane regions (helical) follow at residues 96 to 116 (LGLPVLIIALGGIGFPGGAVY), 129 to 149 (IVSLAGPAANLVLAVLLLGLT), 159 to 179 (VFWSGIAFLGFLQVTALVLNL), and 203 to 223 (LAPAKQWGFLIVVVLLITPAL).

The protein belongs to the peptidase M50B family. The cofactor is Zn(2+).

The protein resides in the cell membrane. The polypeptide is Putative zinc metalloprotease Rip2 (rip2) (Mycolicibacterium smegmatis (strain ATCC 700084 / mc(2)155) (Mycobacterium smegmatis)).